Reading from the N-terminus, the 216-residue chain is Corrinoid protein DSY3155 (216 aa).

One can recognise a B12-binding N-terminal domain in the interval 1–90 (MIMSLLDELK…EIAKKGMSEG (90 aa)). The B12-binding domain maps to 93-216 (KGKIVLGTVE…VELANKILGK (124 aa)). Methylcob(III)alamin is bound at residue H106.

It belongs to the methylamine corrinoid protein family.

In terms of biological role, probably harbors a corrinoid prosthetic group and acts as a methyl group carrier between MtgB and MtgA. A methyl group from glycine betaine is likely first transferred to the corrinoid prosthetic group of the enzyme by MtgB, and then transferred to tetrahydrofolate (THF) by MtgA. The methyl group may then be ultimately converted to carbon dioxide, and its oxidation would also provide reducing equivalents for anaerobic respiration. Thus, may function in the pathway that allows anaerobic methylotrophic growth of D.hafniense using glycine betaine. The protein is Corrinoid protein DSY3155 of Desulfitobacterium hafniense (strain Y51).